Here is a 353-residue protein sequence, read N- to C-terminus: Rhodopsin (353 aa).

Topologically, residues 1 to 36 (MNGTEGPYFYIPMVNTTGIVRSPYEYPQYYLVNPAA) are extracellular. Residues N2 and N15 are each glycosylated (N-linked (GlcNAc...) asparagine). The helical transmembrane segment at 37–61 (YAALGAYMFLLILVGFPVNFLTLYV) threads the bilayer. Topologically, residues 62 to 73 (TLEHKKLRTPLN) are cytoplasmic. Residues 74–96 (YILLNLAVADLFMVLGGFTTTMY) form a helical membrane-spanning segment. The Extracellular segment spans residues 97–110 (TSMHGYFVLGRLGC). C110 and C187 are disulfide-bonded. Residues 111–133 (NVEGFFATLGGEIALWSLVVLAI) form a helical membrane-spanning segment. The 'Ionic lock' involved in activated form stabilization motif lies at 134–136 (ERW). Residues 134-152 (ERWVVVCKPISNFRFSEDH) are Cytoplasmic-facing. A helical membrane pass occupies residues 153–173 (AIMGLAFTWVMASACAVPPLV). The Extracellular portion of the chain corresponds to 174–202 (GWSRYIPEGMQCSCGIDYYTRAEGFNNES). N-linked (GlcNAc...) asparagine glycosylation is present at N200. The chain crosses the membrane as a helical span at residues 203 to 224 (FVIYMFVCHFLIPLVVVFFCYG). At 225–252 (RLLCAVKEAAAAQQESETTQRAEREVSR) the chain is on the cytoplasmic side. A helical transmembrane segment spans residues 253–274 (MVVIMVVAFLVCWCPYAGVAWY). The Extracellular portion of the chain corresponds to 275 to 286 (IFTHQGSEFGPL). A helical transmembrane segment spans residues 287 to 308 (FMTFPAFFAKSSSIYNPMIYIC). An N6-(retinylidene)lysine modification is found at K296. The Cytoplasmic segment spans residues 309–353 (MNKQFRHCMITTLCCGKNPFEEEEGASTTSKTEASSVSSSSVSPA). Residues C322 and C323 are each lipidated (S-palmitoyl cysteine). Positions 330–353 (EEEGASTTSKTEASSVSSSSVSPA) are disordered. Positions 334 to 353 (ASTTSKTEASSVSSSSVSPA) are enriched in low complexity.

This sequence belongs to the G-protein coupled receptor 1 family. Opsin subfamily. In terms of processing, phosphorylated on some or all of the serine and threonine residues present in the C-terminal region. Contains one covalently linked retinal chromophore.

It is found in the membrane. Its subcellular location is the cell projection. The protein localises to the cilium. The protein resides in the photoreceptor outer segment. Functionally, photoreceptor required for image-forming vision at low light intensity. While most salt water fish species use retinal as chromophore, most freshwater fish use 3-dehydroretinal, or a mixture of retinal and 3-dehydroretinal. Light-induced isomerization of 11-cis to all-trans retinal triggers a conformational change that activates signaling via G-proteins. Subsequent receptor phosphorylation mediates displacement of the bound G-protein alpha subunit by arrestin and terminates signaling. In Chelon labrosus (Thicklip grey mullet), this protein is Rhodopsin (rho).